Consider the following 43-residue polypeptide: Protein PsbN (43 aa).

Residues 5–27 (TLFAISISCLLVSFTGYALYTAF) form a helical membrane-spanning segment.

Belongs to the PsbN family.

Its subcellular location is the plastid. It is found in the chloroplast thylakoid membrane. Its function is as follows. May play a role in photosystem I and II biogenesis. This is Protein PsbN from Thuja plicata (Western red-cedar).